The primary structure comprises 96 residues: Neutrophil defensin 3 (96 aa).

The signal sequence occupies residues 1–19; sequence MRTLVILAAILLVALQAQA. Residues 20–66 constitute a propeptide that is removed on maturation; the sequence is EPLQARTDEATAAQEQIPTDNPEVVVSLAWDESLAPKDSVPGLRKNM. Disulfide bonds link cysteine 68-cysteine 96, cysteine 70-cysteine 85, and cysteine 75-cysteine 95.

It is found in the secreted. In terms of biological role, has bacteriostatic activity against Gram-positive bacteria S.aureus and L.monocytogenes and Gram-negative bacterium E.coli and antifungal activity against C.neoformans. This is Neutrophil defensin 3 from Macaca mulatta (Rhesus macaque).